Reading from the N-terminus, the 160-residue chain is Putative NrdI-like protein (160 aa).

The protein belongs to the NrdI family.

The polypeptide is Putative NrdI-like protein (Streptococcus pyogenes serotype M3 (strain ATCC BAA-595 / MGAS315)).